The chain runs to 96 residues: Citrate lyase acyl carrier protein (96 aa).

Ser14 carries the post-translational modification O-(phosphoribosyl dephospho-coenzyme A)serine.

This sequence belongs to the CitD family. As to quaternary structure, oligomer with a subunit composition of (alpha,beta,gamma)6.

Its subcellular location is the cytoplasm. Its function is as follows. Covalent carrier of the coenzyme of citrate lyase. The chain is Citrate lyase acyl carrier protein from Lactococcus lactis subsp. lactis (strain IL1403) (Streptococcus lactis).